Reading from the N-terminus, the 103-residue chain is DNA-directed RNA polymerase subunit omega (103 aa).

It belongs to the RNA polymerase subunit omega family. As to quaternary structure, the RNAP catalytic core consists of 2 alpha, 1 beta, 1 beta' and 1 omega subunit. When a sigma factor is associated with the core the holoenzyme is formed, which can initiate transcription.

It carries out the reaction RNA(n) + a ribonucleoside 5'-triphosphate = RNA(n+1) + diphosphate. Promotes RNA polymerase assembly. Latches the N- and C-terminal regions of the beta' subunit thereby facilitating its interaction with the beta and alpha subunits. This Streptococcus agalactiae serotype III (strain NEM316) protein is DNA-directed RNA polymerase subunit omega.